We begin with the raw amino-acid sequence, 2242 residues long: Multifunctional protein CAD (2242 aa).

The interval 1–365 is GATase (Glutamine amidotransferase); the sequence is MATLFLDDGS…CARDVKLGVN (365 aa). Residues Ser44, Gly222, and Gly224 each coordinate L-glutamine. One can recognise a Glutamine amidotransferase type-1 domain in the interval 177-363; that stretch reads KIMAVDCGMK…LECARDVKLG (187 aa). Catalysis depends on Cys252, which acts as the Nucleophile; for GATase activity. 5 residues coordinate L-glutamine: Leu253, Gln256, Asn294, Gly296, and Phe297. Residues His336 and Glu338 each act as for GATase activity in the active site. The segment at 366–397 is linker; sequence LDKTVKGRVISHYSFKNGTENSKTPPGRIQPH. The interval 398–937 is CPSase A; the sequence is KVLILGSGGL…GEGHDLDFTK (540 aa). Residues 398-1462 are CPSase (Carbamoyl-phosphate synthase); it reads KVLILGSGGL…TPPVKTHIDS (1065 aa). Residues Arg518, Arg558, Gly564, Gly565, Lys595, Glu602, Gly628, Ile629, His630, Gln671, and Glu685 each contribute to the ATP site. 2 consecutive ATP-grasp domains span residues 522-714 and 1057-1248; these read VEKM…KLAL and SRML…KVIM. Mg(2+) is bound by residues Gln671, Glu685, and Asn687. Residues Gln671, Glu685, and Asn687 each coordinate Mn(2+). The CPSase B stretch occupies residues 938 to 1462; sequence PHVMVIGSGV…TPPVKTHIDS (525 aa). ATP contacts are provided by Arg1093, Lys1132, Ile1134, Glu1139, Gly1164, Val1165, His1166, Ser1167, Gln1207, and Glu1219. 3 residues coordinate Mg(2+): Gln1207, Glu1219, and Asn1221. Residues Gln1207, Glu1219, and Asn1221 each contribute to the Mn(2+) site. The region spanning 1313-1469 is the MGS-like domain; that stretch reads FKIPKKNILL…IDSMSSHKLI (157 aa). The DHOase (dihydroorotase) stretch occupies residues 1463–1796; that stretch reads MSSHKLIRLP…KGRVRRVVLR (334 aa). Residues His1478 and His1480 each coordinate Zn(2+). Arg1482 and Asn1512 together coordinate (S)-dihydroorotate. The Zn(2+) site is built by Lys1563, His1597, Cys1620, His1621, and Glu1644. Lys1563 bears the N6-carboxylysine mark. Arg1668 contacts (S)-dihydroorotate. Asp1693 contributes to the Zn(2+) binding site. Residue Asp1693 is the For DHOase activity of the active site. Residues His1697 and Pro1709 each coordinate (S)-dihydroorotate. The tract at residues 1797-1934 is linker; the sequence is GEVAYIDGQV…QAVPHPYSLL (138 aa). The disordered stretch occupies residues 1829–1862; sequence PTTVKTPEHSKPTQTETVRTRTASPRRLASSGPA. Polar residues predominate over residues 1840–1851; the sequence is PTQTETVRTRTA. Residues 1935–2242 are ATCase (Aspartate transcarbamylase); the sequence is LHPFVGQHIL…ALLATVLGKF (308 aa). Residues Arg1992 and Thr1993 each contribute to the carbamoyl phosphate site. Residue Lys2020 participates in L-aspartate binding. 3 residues coordinate carbamoyl phosphate: Arg2041, His2069, and Gln2072. L-aspartate-binding residues include Arg2102 and Arg2163. Carbamoyl phosphate-binding residues include Leu2202 and Pro2203.

In the N-terminal section; belongs to the CarA family. It in the 2nd section; belongs to the CarB family. This sequence in the 3rd section; belongs to the metallo-dependent hydrolases superfamily. DHOase family. CAD subfamily. The protein in the C-terminal section; belongs to the aspartate/ornithine carbamoyltransferase superfamily. ATCase family. Homohexamer. It depends on Mg(2+) as a cofactor. Requires Mn(2+) as cofactor. The cofactor is Zn(2+). In terms of tissue distribution, present in the testis but not in the liver.

It is found in the cytoplasm. It localises to the nucleus. The catalysed reaction is hydrogencarbonate + L-glutamine + 2 ATP + H2O = carbamoyl phosphate + L-glutamate + 2 ADP + phosphate + 2 H(+). The enzyme catalyses L-glutamine + H2O = L-glutamate + NH4(+). It carries out the reaction hydrogencarbonate + NH4(+) + 2 ATP = carbamoyl phosphate + 2 ADP + phosphate + 2 H(+). It catalyses the reaction carbamoyl phosphate + L-aspartate = N-carbamoyl-L-aspartate + phosphate + H(+). The catalysed reaction is (S)-dihydroorotate + H2O = N-carbamoyl-L-aspartate + H(+). The protein operates within pyrimidine metabolism; UMP biosynthesis via de novo pathway; (S)-dihydroorotate from bicarbonate: step 1/3. It participates in pyrimidine metabolism; UMP biosynthesis via de novo pathway; (S)-dihydroorotate from bicarbonate: step 2/3. Its pathway is pyrimidine metabolism; UMP biosynthesis via de novo pathway; (S)-dihydroorotate from bicarbonate: step 3/3. Allosterically regulated and controlled by phosphorylation. 5-phosphoribose 1-diphosphate is an activator while UMP is an inhibitor of the CPSase reaction. In terms of biological role, multifunctional protein that encodes the first 3 enzymatic activities of the de novo pyrimidine pathway: carbamoylphosphate synthetase (CPSase; EC 6.3.5.5), aspartate transcarbamylase (ATCase; EC 2.1.3.2) and dihydroorotase (DHOase; EC 3.5.2.3). The CPSase-function is accomplished in 2 steps, by a glutamine-dependent amidotransferase activity (GATase) that binds and cleaves glutamine to produce ammonia, followed by an ammonium-dependent carbamoyl phosphate synthetase, which reacts with the ammonia, hydrogencarbonate and ATP to form carbamoyl phosphate. The endogenously produced carbamoyl phosphate is sequestered and channeled to the ATCase active site. ATCase then catalyzes the formation of carbamoyl-L-aspartate from L-aspartate and carbamoyl phosphate. In the last step, DHOase catalyzes the cyclization of carbamoyl aspartate to dihydroorotate. The polypeptide is Multifunctional protein CAD (CAD) (Squalus acanthias (Spiny dogfish)).